The following is a 325-amino-acid chain: D site-binding protein (325 aa).

Disordered regions lie at residues 1 to 99 (MARP…APGL), 127 to 200 (GLPP…DTVE), and 229 to 255 (RFSE…EQKD). The span at 17–28 (GPAGTPPGGGAL) shows a compositional bias: gly residues. Composition is skewed to low complexity over residues 29 to 38 (LGLRSLLQGT) and 57 to 80 (ALPA…PAGA). Position 86 is a phosphoserine (serine 86). Residues 129 to 153 (PPSPPPPGGPSPEPSPARTPAPSPG) show a composition bias toward pro residues. Residues 157 to 167 (CGSASPRSSPG) are compositionally biased toward low complexity. The region spanning 255–318 (DEKYWSRRYK…SHYRAVLSRY (64 aa)) is the bZIP domain. The segment at 257 to 279 (KYWSRRYKNNEAAKRSRDARRLK) is basic motif. Residues 283–297 (ISVRAAFLEKENALL) are leucine-zipper.

This sequence belongs to the bZIP family. PAR subfamily. Binds DNA as a homodimer or a heterodimer. Can form a heterodimer with TEF. Ubiquitously expressed. Expressed in the suprachiasmatic nuclei (SCN) and in most peripheral tissues, with a strong circadian rhythmicity.

It is found in the nucleus. This transcriptional activator recognizes and binds to the sequence 5'-RTTAYGTAAY-3' found in the promoter of genes such as albumin, CYP2A4 and CYP2A5. It is not essential for circadian rhythm generation, but modulates important clock output genes. May be a direct target for regulation by the circadian pacemaker component clock. May affect circadian period and sleep regulation. The sequence is that of D site-binding protein (DBP) from Homo sapiens (Human).